The sequence spans 617 residues: Dihydroxy-acid dehydratase (617 aa).

Residue Asp82 participates in Mg(2+) binding. Cys123 is a binding site for [2Fe-2S] cluster. Asp124 and Lys125 together coordinate Mg(2+). Residue Lys125 is modified to N6-carboxylysine. Cys197 contributes to the [2Fe-2S] cluster binding site. Glu497 contributes to the Mg(2+) binding site. The Proton acceptor role is filled by Ser523.

Belongs to the IlvD/Edd family. As to quaternary structure, homodimer. Requires [2Fe-2S] cluster as cofactor. The cofactor is Mg(2+).

It carries out the reaction (2R)-2,3-dihydroxy-3-methylbutanoate = 3-methyl-2-oxobutanoate + H2O. It catalyses the reaction (2R,3R)-2,3-dihydroxy-3-methylpentanoate = (S)-3-methyl-2-oxopentanoate + H2O. Its pathway is amino-acid biosynthesis; L-isoleucine biosynthesis; L-isoleucine from 2-oxobutanoate: step 3/4. The protein operates within amino-acid biosynthesis; L-valine biosynthesis; L-valine from pyruvate: step 3/4. In terms of biological role, functions in the biosynthesis of branched-chain amino acids. Catalyzes the dehydration of (2R,3R)-2,3-dihydroxy-3-methylpentanoate (2,3-dihydroxy-3-methylvalerate) into 2-oxo-3-methylpentanoate (2-oxo-3-methylvalerate) and of (2R)-2,3-dihydroxy-3-methylbutanoate (2,3-dihydroxyisovalerate) into 2-oxo-3-methylbutanoate (2-oxoisovalerate), the penultimate precursor to L-isoleucine and L-valine, respectively. The chain is Dihydroxy-acid dehydratase from Streptomyces avermitilis (strain ATCC 31267 / DSM 46492 / JCM 5070 / NBRC 14893 / NCIMB 12804 / NRRL 8165 / MA-4680).